The primary structure comprises 318 residues: Homoserine kinase (318 aa).

97 to 107 serves as a coordination point for ATP; the sequence is PIGSGLGSSAC.

Belongs to the GHMP kinase family. Homoserine kinase subfamily.

It is found in the cytoplasm. It carries out the reaction L-homoserine + ATP = O-phospho-L-homoserine + ADP + H(+). It functions in the pathway amino-acid biosynthesis; L-threonine biosynthesis; L-threonine from L-aspartate: step 4/5. Catalyzes the ATP-dependent phosphorylation of L-homoserine to L-homoserine phosphate. The chain is Homoserine kinase from Aliivibrio fischeri (strain MJ11) (Vibrio fischeri).